Reading from the N-terminus, the 81-residue chain is EC protein III (81 aa).

It belongs to the metallothionein superfamily. Type 15 family.

Binds 5 molecules of zinc. May have a role in Zn(2+) homeostasis during embryogenesis. The sequence is that of EC protein III from Triticum aestivum (Wheat).